Consider the following 170-residue polypeptide: Cathelicidin antimicrobial peptide (170 aa).

The N-terminal stretch at 1–30 is a signal peptide; the sequence is MKTQRDSPSLGRWSLVLLLLGLVMPLAIVA. Residues 31 to 131 constitute a propeptide, cathelin-like domain (CLD); it reads QVLSYQEAVL…DISCDKDNRR (101 aa). Disulfide bonds link cysteine 86/cysteine 97 and cysteine 108/cysteine 125. The interval 150–162 is active core; sequence LKKVGQKIKDFLG.

Belongs to the cathelicidin family. Monomer, homodimer or homotrimer (in vitro). Oligomerizes as tetra- or hexamer in solution (in vitro). Proteolytically cleaved by proteinase PRTN3 into antibacterial peptide LL-37. Proteolytically cleaved by cathepsin CTSG and neutrophil elastase ELANE. In terms of processing, resistant to proteolytic degradation in solution, and when bound to both zwitterionic (mimicking mammalian membranes) and negatively charged membranes (mimicking bacterial membranes). Post-translationally, after secretion onto the skin surface, the CAMP gene product is processed by a serine protease-dependent mechanism into multiple novel antimicrobial peptides distinct from and shorter than cathelicidin LL-37. These peptides show enhanced antimicrobial action, acquiring the ability to kill skin pathogens such as S.aureus, E.coli and C.albicans. These peptides have lost the ability to stimulate CXCL8/IL8 release from keratinocytes. The peptides act synergistically, killing bacteria at lower concentrations when present together, and maintain activity at increased salt condition.

It localises to the secreted. Its subcellular location is the vesicle. Functionally, antimicrobial protein that is an integral component of the innate immune system. Binds to bacterial lipopolysaccharides (LPS). Acts via neutrophil N-formyl peptide receptors to enhance the release of CXCL2. Postsecretory processing generates multiple cathelicidin antimicrobial peptides with various lengths which act as a topical antimicrobial defense in sweat on skin. The unprocessed precursor form, cathelicidin antimicrobial peptide, inhibits the growth of Gram-negative E.coli and E.aerogenes with efficiencies comparable to that of the mature peptide LL-37 (in vitro). Antimicrobial peptide that is an integral component of the innate immune system. Binds to bacterial lipopolysaccharides (LPS). Causes membrane permeabilization by forming transmembrane pores (in vitro). Causes lysis of E.coli. Exhibits antimicrobial activity against Gram-negative bacteria such as P.aeruginosa, S.typhimurium, E.aerogenes, E.coli and P.syringae, Gram-positive bacteria such as L.monocytogenes, S.epidermidis, S.pyogenes and S.aureus, as well as vancomycin-resistant enterococci (in vitro). Exhibits antimicrobial activity against methicillin-resistant S.aureus, P.mirabilis, and C.albicans in low-salt media, but not in media containing 100 mM NaCl (in vitro). Forms chiral supramolecular assemblies with quinolone signal (PQS) molecules of P.aeruginosa, which may lead to interference of bacterial quorum signaling and perturbance of bacterial biofilm formation. May form supramolecular fiber-like assemblies on bacterial membranes. Induces cytokine and chemokine producation as well as TNF/TNFA and CSF2/GMCSF production in normal human keratinocytes. Exhibits hemolytic activity against red blood cells. Its function is as follows. Exhibits antimicrobial activity against E.coli and B.megaterium (in vitro). The polypeptide is Cathelicidin antimicrobial peptide (Macaca fascicularis (Crab-eating macaque)).